The sequence spans 700 residues: Elongation factor G (700 aa).

Residues 10 to 286 (TKVRNIGIMA…AVVDYLPSPL (277 aa)) enclose the tr-type G domain. Residues 19 to 26 (AHIDAGKT), 83 to 87 (DTPGH), and 137 to 140 (NKMD) each bind GTP.

Belongs to the TRAFAC class translation factor GTPase superfamily. Classic translation factor GTPase family. EF-G/EF-2 subfamily.

The protein resides in the cytoplasm. In terms of biological role, catalyzes the GTP-dependent ribosomal translocation step during translation elongation. During this step, the ribosome changes from the pre-translocational (PRE) to the post-translocational (POST) state as the newly formed A-site-bound peptidyl-tRNA and P-site-bound deacylated tRNA move to the P and E sites, respectively. Catalyzes the coordinated movement of the two tRNA molecules, the mRNA and conformational changes in the ribosome. This is Elongation factor G from Saccharopolyspora erythraea (strain ATCC 11635 / DSM 40517 / JCM 4748 / NBRC 13426 / NCIMB 8594 / NRRL 2338).